The chain runs to 929 residues: Formin-like protein 11 (929 aa).

The signal sequence occupies residues 1–28 (MMRHCRREWLLALCLISVQLLIPTGCEG). The segment at 153–215 (ESSTTKSIPE…KSVAEKKKDS (63 aa)) is disordered. Positions 171–189 (KTSTPKPVNKPTDSVSSPP) are enriched in polar residues. Over residues 191–215 (RSYKSAPTEKENPPTKSVAEKKKDS) the composition is skewed to basic and acidic residues. The chain crosses the membrane as a helical span at residues 222–242 (FIGLSIAGIALMAHLCLCCFM). Disordered regions lie at residues 372–472 (PVGS…ENSN) and 726–749 (AAKE…SEQT). Residues 382-447 (MQPPVMPPPI…GPPRPPPPAM (66 aa)) show a composition bias toward pro residues. Positions 468 to 898 (VENSNEAKTK…KAKAKQPSQS (431 aa)) constitute an FH2 domain. Residues 738-749 (KTDDLGDKSEQT) are compositionally biased toward basic and acidic residues.

Belongs to the formin-like family. Class-I subfamily.

The protein resides in the membrane. This chain is Formin-like protein 11 (FH11), found in Oryza sativa subsp. japonica (Rice).